Consider the following 229-residue polypeptide: Germin-like protein 12-2 (229 aa).

The N-terminal stretch at 1–22 is a signal peptide; the sequence is MASSNFFLLTALIALVATQAMA. A disulfide bridge links Cys-32 with Cys-47. The 156-residue stretch at 62 to 217 folds into the Cupin type-1 domain; the sequence is ANLDKPMDTT…AFQVDKKAVD (156 aa). Asn-78 carries an N-linked (GlcNAc...) asparagine glycan. Mn(2+)-binding residues include His-111, His-113, Glu-118, and His-162.

Belongs to the germin family. In terms of assembly, oligomer (believed to be a pentamer but probably hexamer).

The protein localises to the secreted. It is found in the extracellular space. It localises to the apoplast. May play a role in plant defense. Probably has no oxalate oxidase activity even if the active site is conserved. This chain is Germin-like protein 12-2, found in Oryza sativa subsp. japonica (Rice).